The primary structure comprises 340 residues: Replication initiation protein (340 aa).

The disordered stretch occupies residues 38-58 (PERKRTKRRRGEHSTKPKCEN).

This is Replication initiation protein (repA1) from Escherichia coli.